We begin with the raw amino-acid sequence, 104 residues long: L-rhamnose mutarotase (104 aa).

Tyrosine 18 contacts substrate. Catalysis depends on histidine 22, which acts as the Proton donor. Substrate is bound by residues tyrosine 41 and 76–77 (WW).

Belongs to the rhamnose mutarotase family. As to quaternary structure, homodimer.

The protein resides in the cytoplasm. The enzyme catalyses alpha-L-rhamnose = beta-L-rhamnose. It functions in the pathway carbohydrate metabolism; L-rhamnose metabolism. Its function is as follows. Involved in the anomeric conversion of L-rhamnose. The protein is L-rhamnose mutarotase of Shigella flexneri serotype 5b (strain 8401).